We begin with the raw amino-acid sequence, 461 residues long: Asparagine--tRNA ligase (461 aa).

Belongs to the class-II aminoacyl-tRNA synthetase family. As to quaternary structure, homodimer.

It localises to the cytoplasm. It carries out the reaction tRNA(Asn) + L-asparagine + ATP = L-asparaginyl-tRNA(Asn) + AMP + diphosphate + H(+). In Oleidesulfovibrio alaskensis (strain ATCC BAA-1058 / DSM 17464 / G20) (Desulfovibrio alaskensis), this protein is Asparagine--tRNA ligase.